A 126-amino-acid polypeptide reads, in one-letter code: Putative esterase ComA2 (126 aa).

This sequence belongs to the thioesterase PaaI family.

In terms of biological role, is not required for competence. The polypeptide is Putative esterase ComA2 (yuxO) (Bacillus subtilis (strain 168)).